The following is a 148-amino-acid chain: FAD synthase (148 aa).

Residues 14–15, 19–22, and Asp100 contribute to the ATP site; these read VF and HAGH.

It belongs to the archaeal FAD synthase family. In terms of assembly, homodimer. The cofactor is a divalent metal cation.

The catalysed reaction is FMN + ATP + H(+) = FAD + diphosphate. Its pathway is cofactor biosynthesis; FAD biosynthesis; FAD from FMN: step 1/1. Its function is as follows. Catalyzes the transfer of the AMP portion of ATP to flavin mononucleotide (FMN) to produce flavin adenine dinucleotide (FAD) coenzyme. The chain is FAD synthase from Pyrococcus horikoshii (strain ATCC 700860 / DSM 12428 / JCM 9974 / NBRC 100139 / OT-3).